The chain runs to 268 residues: MLRIAGRKLSSSAATRSSSAFFTRNPFTFTDDSSSPARSPSPASLASQFLDQFRGFSSNSVSPAHQTGLVSDLPATVAAIKNPSSKIVYDDSNHERYPPGDPSKRAFAYFVLTGGRFVYASLVRLLILKFVLSMSASKDVLALASLEVDLSSIEPGTTVTVKWRGKPVFIRRRTEEDINLANSVDLGSLRDPQQDAERVKNPEWLVVIGVCTHLGCIPLPNAGDFGGWFCPCHGSHYDISGRIRKGPAPYNLEVPTYSFMEENKLLIG.

The transit peptide at 1–56 (MLRIAGRKLSSSAATRSSSAFFTRNPFTFTDDSSSPARSPSPASLASQFLDQFRGF) directs the protein to the mitochondrion. The Mitochondrial matrix segment spans residues 57–105 (SSNSVSPAHQTGLVSDLPATVAAIKNPSSKIVYDDSNHERYPPGDPSKR). A helical membrane pass occupies residues 106–128 (AFAYFVLTGGRFVYASLVRLLIL). Topologically, residues 129–268 (KFVLSMSASK…FMEENKLLIG (140 aa)) are mitochondrial intermembrane. The region spanning 178–266 (INLANSVDLG…YSFMEENKLL (89 aa)) is the Rieske domain. Positions 211, 213, 230, and 233 each coordinate [2Fe-2S] cluster. An intrachain disulfide couples cysteine 216 to cysteine 232.

The protein belongs to the Rieske iron-sulfur protein family. As to quaternary structure, component of the ubiquinol-cytochrome c oxidoreductase (cytochrome b-c1 complex, complex III, CIII), a multisubunit enzyme composed of 3 respiratory subunits cytochrome b, cytochrome c1 and Rieske protein, 2 core protein subunits, and several low-molecular weight protein subunits. The complex exists as an obligatory dimer and forms supercomplexes (SCs) in the inner mitochondrial membrane with cytochrome c oxidase (complex IV, CIV). It depends on [2Fe-2S] cluster as a cofactor. In terms of tissue distribution, high levels are seen in the flowers while a low level expression is seen in the roots, leaves and stems.

It localises to the mitochondrion inner membrane. The catalysed reaction is a quinol + 2 Fe(III)-[cytochrome c](out) = a quinone + 2 Fe(II)-[cytochrome c](out) + 2 H(+)(out). Its function is as follows. Component of the ubiquinol-cytochrome c oxidoreductase, a multisubunit transmembrane complex that is part of the mitochondrial electron transport chain which drives oxidative phosphorylation. The respiratory chain contains 3 multisubunit complexes succinate dehydrogenase (complex II, CII), ubiquinol-cytochrome c oxidoreductase (cytochrome b-c1 complex, complex III, CIII) and cytochrome c oxidase (complex IV, CIV), that cooperate to transfer electrons derived from NADH and succinate to molecular oxygen, creating an electrochemical gradient over the inner membrane that drives transmembrane transport and the ATP synthase. The cytochrome b-c1 complex catalyzes electron transfer from ubiquinol to cytochrome c, linking this redox reaction to translocation of protons across the mitochondrial inner membrane, with protons being carried across the membrane as hydrogens on the quinol. In the process called Q cycle, 2 protons are consumed from the matrix, 4 protons are released into the intermembrane space and 2 electrons are passed to cytochrome c. The Rieske protein is a catalytic core subunit containing a [2Fe-2S] iron-sulfur cluster. It cycles between 2 conformational states during catalysis to transfer electrons from the quinol bound in the Q(0) site in cytochrome b to cytochrome c1. In Nicotiana tabacum (Common tobacco), this protein is Cytochrome b-c1 complex subunit Rieske-3, mitochondrial.